The following is a 375-amino-acid chain: MDALRLANSAFAVDLFKQLCERDPAGNILFSPICLSTSLSLAQVGTKGDTANEIGQVLHFENVKDVPFGFQTVTSDVNKLSSFYSLKLVKRLYIDKSLNPSTEFISSTKRPYAKELETVDFKDKLEETKGQINSSIKELTDGHFEDILSENSISDQTKILVVNAAYFVGKWMKKFPESETKECPFRISKTDTKPVQMMNLEATFCLGNIDDISCKIIELPFQNKHLSMLIVLPKDVEDESTGLEKIEQQLNPETLLQWTNPSTMANAKVKLSLPKFKVEKMIDPKASLESLGLKSLFNESTSDFSGMSETKGVSLSNVIHRVCLEITEDGGESIEVPGSRILQHKDEFNADHPFIYIIRHNKTRNIIFFGKFCSP.

Asn-133, Asn-298, and Asn-361 each carry an N-linked (GlcNAc...) asparagine glycan.

This sequence belongs to the serpin family. Ov-serpin subfamily. Interacts with IRF6.

It localises to the secreted. The protein localises to the extracellular space. Tumor suppressor. It blocks the growth, invasion, and metastatic properties of mammary tumors. As it does not undergo the S (stressed) to R (relaxed) conformational transition characteristic of active serpins, it exhibits no serine protease inhibitory activity. The protein is Serpin B5 (Serpinb5) of Mus musculus (Mouse).